The primary structure comprises 1726 residues: Merozoite surface protein 1 (1726 aa).

Positions 1–19 are cleaved as a signal peptide; it reads MKIIFFLCSFLFFIINTQC. The span at 61 to 124 shows a compositional bias: low complexity; it reads KGASAQSGTS…SGTSGTSPSS (64 aa). The tract at residues 61–149 is disordered; that stretch reads KGASAQSGTS…PPADASDSDA (89 aa). Residues 125–134 are compositionally biased toward polar residues; it reads RSNTLPRSNT. A glycan (N-linked (GlcNAc...) asparagine) is linked at Asn-133. Residues 135–144 are compositionally biased toward low complexity; the sequence is SSGASPPADA. N-linked (GlcNAc...) asparagine glycans are attached at residues Asn-272, Asn-501, Asn-567, and Asn-638. Positions 735-771 are disordered; that stretch reads SETTEDGGHSTHTLSQSGETEVTEETEETEETVGHTT. Over residues 755–765 the composition is skewed to acidic residues; it reads EVTEETEETEE. Asn-827, Asn-924, Asn-944, Asn-990, Asn-1016, Asn-1114, and Asn-1221 each carry an N-linked (GlcNAc...) asparagine glycan. Positions 914–952 are enriched in low complexity; that stretch reads TGTSSTSSPGNTTVNTAQSATHSNSQNQQSNASSTNTQN. Residues 914–961 are disordered; the sequence is TGTSSTSSPGNTTVNTAQSATHSNSQNQQSNASSTNTQNGVAVSSGPA. Disordered regions lie at residues 1254–1284 and 1476–1497; these read VTPP…TQIP and KEKF…DEQK. The span at 1270–1284 shows a compositional bias: polar residues; sequence VSGSSGSTKEETQIP. A compositionally biased stretch (pro residues) spans 1481 to 1490; sequence SSPPTTPPSP. Asn-1613 carries an N-linked (GlcNAc...) asparagine glycan. EGF-like domains lie at 1617–1657 and 1658–1705; these read HQCV…VENP and NPTC…IFCS. 6 disulfide bridges follow: Cys-1619–Cys-1630, Cys-1624–Cys-1640, Cys-1642–Cys-1653, Cys-1661–Cys-1674, Cys-1668–Cys-1688, and Cys-1690–Cys-1704. Residue Ser-1705 is the site of GPI-anchor amidated serine attachment. A propeptide spans 1706–1726 (removed in mature form); it reads SSNFLGISFLLILMLILYSFI.

As to quaternary structure, forms a complex composed of subunits p83, p30, p38, and p42 which remain non-covalently associated; the complex is formed at the merozoite surface prior to egress from host erythrocytes. Forms a complex composed of processed MSP1 subunits, MSP6 subunit p36 and MSP7; the complex is formed at the merozoite surface prior to egress from host erythrocytes. Within the complex, interacts (via subunit p38) with MSP6 subunit p36 and (via subunits p83, p30 and p38) with MSP7 (via subunit p22). Forms a complex composed of MSP1, MSP6, DBLMSP1 and DBLMSP2. Within the complex, interacts (via subunit p38) with DBLMSP1 and DBLMSP2. Forms a complex composed of MSP1, and rhoptry proteins RhopH3, RAP1 and CLAG9/RhopH3. Within the complex, interacts (via subunits p42 and p19) with RhopH3 (via C-terminus). Forms a complex composed of MSP1, MSP6, MSP7, MSP9 and MSP3; within the complex, MSP6 and MSP9 mediate the binding to the host erythrocyte. Interacts (via subunits p19 and p42) with MSP9; the interaction is direct; MSP1 subunits p19 or p42, and MSP9 form a co-ligand complex that interacts with host SLC4A1/Band 3 protein. May interact with PFD6. Interacts with host spectrin. In terms of assembly, interacts with host glycophorin GYPA in a sialic acid-independent manner. Interacts with host proinflammatory cytokine S100P; the interaction blocks S100P inflammatory and chemotactic activities. As to quaternary structure, interacts with host SLC4A1/Band 3 (via 5ABC region) on the host erythrocyte surface in a sialic acid-independent manner. The p190 precursor is cleaved by SUB1 prior to merozoite egress into 4 subunits p83, p30, p38, and p42 which remain non-covalently associated. SUB1-mediated proteolytic cleavage occurs in an orderly manner; the first cleavage occurs at the p30/p38 site, followed by cleavage at the p83/p30 site, the last cleavage occurs at the p38/p42 site. The order of cleavage is essential for parasite viability. SUB1-mediated processing is essential for merozoite egress. In a second processing step during erythrocyte invasion, p42 is cleaved by SUB2 into p33 and p19; the latter remains attached to the merozoite surface via its GPI-anchor and is endocytosed during the subsequent ring stage.

The protein localises to the cell membrane. It is found in the secreted. It localises to the vacuole membrane. Functionally, during the asexual blood stage, involved in merozoite egress from host erythrocytes possibly via its interaction with the host cytoskeleton protein spectrin resulting in the destabilization of the host cytoskeleton and thus leading to erythrocyte cell membrane rupture. Involved in the binding to host erythrocytes and is required for host erythrocyte invasion. By binding to host proinflammatory cytokine S100P may interfere with host immune responses. Its function is as follows. Involved in merozoite invasion of host erythrocytes. May play a role in the biogenesis and/or function of the food vacuole during the intraerythrocytic development. This is Merozoite surface protein 1 from Plasmodium falciparum (isolate Palo Alto / Uganda).